A 551-amino-acid chain; its full sequence is Cleavage and polyadenylation specificity factor subunit 6 (551 aa).

The interval M1–G213 is necessary for interaction with NXF1. An RRM domain is found at I81–K161. Residues I81 to K161 form a necessary for interaction with NUDT21/CPSF5 region. The necessary for nuclear paraspeckles localization stretch occupies residues I81–K161. T157 is subject to Phosphothreonine. Over residues M169–M180 the composition is skewed to polar residues. Disordered regions lie at residues M169–E411 and L477–R551. The segment covering G184–S193 has biased composition (gly residues). Residues R202–R206 carry the GAR motif. A compositionally biased stretch (low complexity) spans F207–G219. Composition is skewed to pro residues over residues P220–G265, G285–T366, and G377–P388. Residues P389–T404 show a composition bias toward basic and acidic residues. T404 and T407 each carry phosphothreonine. A sufficient for nuclear speckle localization region spans residues T404 to R551. Positions A405 to R551 are necessary for RNA-binding. The tract at residues E481–R551 is necessary for interaction with SRSF3, SRSF7 and TRA2B/SFRS10. The segment covering S489–R503 has biased composition (basic and acidic residues). The tract at residues R490–R551 is arg/Ser-rich domain. Phosphoserine is present on residues S494, S500, S511, S513, and S525. Residues E504–R514 are compositionally biased toward basic residues. Residues K510–R551 form a sufficient for nuclear targeting region. Residues D515 to R551 are compositionally biased toward basic and acidic residues.

Belongs to the RRM CPSF6/7 family. Component of the cleavage factor Im (CFIm) complex which is a heterotetramer composed of two subunits of NUDT21/CPSF5 and two subunits of CPSF6 or CPSF7 or a heterodimer of CPSF6 and CPSF7. The cleavage factor Im (CFIm) complex associates with the CPSF and CSTF complexes to promote the assembly of the core mRNA 3'-processing machinery. Associates with the exon junction complex (EJC). Associates with the 80S ribosome particle. Interacts (via the RRM domain) with NUDT21/CPSF5; this interaction is direct and enhances binding to RNA. Interacts (via Arg/Ser-rich domain) with FIP1L1 (preferentially via unphosphorylated form and Arg/Glu/Asp-rich domain); this interaction mediates, at least in part, the interaction between the CFIm and CPSF complexes and may be inhibited by CPSF6 hyper-phosphorylation. Interacts (via N-terminus) with NXF1; this interaction is direct. Interacts with SRSF3. Interacts with SRSF7. Interacts with SNRNP70. Interacts with TRA2B/SFRS10. Interacts with UPF1. Interacts with UPF3B. Interacts with VIRMA. Interacts (via Arg/Ser-rich domain) with TNPO3; promoting nuclear import of CPSF6 independently of its phosphorylation status. Interacts with YTHDC1. In terms of processing, phosphorylated. Phosphorylated in the Arg/Ser-rich domain by SRPK1, in vitro. Post-translationally, symmetrically dimethylated on arginine residues by PRMT5 in a WDR77- and CLNS1A-dependent manner. Asymmetrically dimethylated on arginine residues by PRMT1. Symmetrically dimethylated on arginine residues in the GAR motif by PRMT5 in a WDR77- and CLNS1A-dependent manner. Asymmetrically dimethylated on arginine residues in the GAR motif by PRMT1. Expressed in testis. Expressed in male germ cells (at protein level).

It is found in the nucleus. Its subcellular location is the nucleoplasm. The protein localises to the nucleus speckle. It localises to the cytoplasm. Functionally, component of the cleavage factor Im (CFIm) complex that functions as an activator of the pre-mRNA 3'-end cleavage and polyadenylation processing required for the maturation of pre-mRNA into functional mRNAs. CFIm contributes to the recruitment of multiprotein complexes on specific sequences on the pre-mRNA 3'-end, so called cleavage and polyadenylation signals (pA signals). Most pre-mRNAs contain multiple pA signals, resulting in alternative cleavage and polyadenylation (APA) producing mRNAs with variable 3'-end formation. The CFIm complex acts as a key regulator of cleavage and polyadenylation site choice during APA through its binding to 5'-UGUA-3' elements localized in the 3'-untranslated region (UTR) for a huge number of pre-mRNAs. CPSF6 enhances NUDT21/CPSF5 binding to 5'-UGUA-3' elements localized upstream of pA signals and promotes RNA looping, and hence activates directly the mRNA 3'-processing machinery. Plays a role in mRNA export. The sequence is that of Cleavage and polyadenylation specificity factor subunit 6 from Mus musculus (Mouse).